We begin with the raw amino-acid sequence, 348 residues long: UDP-glucose 4-epimerase (348 aa).

Residues 12–14 (GYI), 33–37 (DNFHN), 66–67 (DI), Phe-88, and Lys-92 contribute to the NAD(+) site. Position 132–134 (132–134 (SAT)) interacts with substrate. Tyr-157 acts as the Proton acceptor in catalysis. 2 residues coordinate NAD(+): Lys-161 and Tyr-185. Residues 185–187 (YFN), 206–208 (NNL), 224–226 (NVF), Arg-239, and 300–303 (REGD) each bind substrate.

Belongs to the NAD(P)-dependent epimerase/dehydratase family. In terms of assembly, homodimer. It depends on NAD(+) as a cofactor.

The catalysed reaction is UDP-alpha-D-glucose = UDP-alpha-D-galactose. It catalyses the reaction UDP-N-acetyl-alpha-D-glucosamine = UDP-N-acetyl-alpha-D-galactosamine. It participates in carbohydrate metabolism; galactose metabolism. Its function is as follows. Catalyzes two distinct but analogous reactions: the reversible epimerization of UDP-glucose to UDP-galactose and the reversible epimerization of UDP-N-acetylglucosamine to UDP-N-acetylgalactosamine. The reaction with UDP-Gal plays a critical role in the Leloir pathway of galactose catabolism in which galactose is converted to the glycolytic intermediate glucose 6-phosphate. It contributes to the catabolism of dietary galactose and enables the endogenous biosynthesis of both UDP-Gal and UDP-GalNAc when exogenous sources are limited. Both UDP-sugar interconversions are important in the synthesis of glycoproteins and glycolipids. The protein is UDP-glucose 4-epimerase of Bos taurus (Bovine).